A 184-amino-acid polypeptide reads, in one-letter code: Crossover junction endodeoxyribonuclease RuvC (184 aa).

Residues Asp-11, Glu-73, and Asp-147 contribute to the active site. Residues Asp-11, Glu-73, and Asp-147 each coordinate Mg(2+).

It belongs to the RuvC family. As to quaternary structure, homodimer which binds Holliday junction (HJ) DNA. The HJ becomes 2-fold symmetrical on binding to RuvC with unstacked arms; it has a different conformation from HJ DNA in complex with RuvA. In the full resolvosome a probable DNA-RuvA(4)-RuvB(12)-RuvC(2) complex forms which resolves the HJ. Mg(2+) is required as a cofactor.

It localises to the cytoplasm. The catalysed reaction is Endonucleolytic cleavage at a junction such as a reciprocal single-stranded crossover between two homologous DNA duplexes (Holliday junction).. Its function is as follows. The RuvA-RuvB-RuvC complex processes Holliday junction (HJ) DNA during genetic recombination and DNA repair. Endonuclease that resolves HJ intermediates. Cleaves cruciform DNA by making single-stranded nicks across the HJ at symmetrical positions within the homologous arms, yielding a 5'-phosphate and a 3'-hydroxyl group; requires a central core of homology in the junction. The consensus cleavage sequence is 5'-(A/T)TT(C/G)-3'. Cleavage occurs on the 3'-side of the TT dinucleotide at the point of strand exchange. HJ branch migration catalyzed by RuvA-RuvB allows RuvC to scan DNA until it finds its consensus sequence, where it cleaves and resolves the cruciform DNA. The chain is Crossover junction endodeoxyribonuclease RuvC from Neisseria gonorrhoeae (strain ATCC 700825 / FA 1090).